Reading from the N-terminus, the 256-residue chain is Thiazole synthase (256 aa).

The Schiff-base intermediate with DXP role is filled by K98. 1-deoxy-D-xylulose 5-phosphate contacts are provided by residues G159, 185 to 186 (AG), and 207 to 208 (NT).

It belongs to the ThiG family. As to quaternary structure, homotetramer. Forms heterodimers with either ThiH or ThiS.

It is found in the cytoplasm. It catalyses the reaction [ThiS sulfur-carrier protein]-C-terminal-Gly-aminoethanethioate + 2-iminoacetate + 1-deoxy-D-xylulose 5-phosphate = [ThiS sulfur-carrier protein]-C-terminal Gly-Gly + 2-[(2R,5Z)-2-carboxy-4-methylthiazol-5(2H)-ylidene]ethyl phosphate + 2 H2O + H(+). The protein operates within cofactor biosynthesis; thiamine diphosphate biosynthesis. Catalyzes the rearrangement of 1-deoxy-D-xylulose 5-phosphate (DXP) to produce the thiazole phosphate moiety of thiamine. Sulfur is provided by the thiocarboxylate moiety of the carrier protein ThiS. In vitro, sulfur can be provided by H(2)S. This Aliivibrio salmonicida (strain LFI1238) (Vibrio salmonicida (strain LFI1238)) protein is Thiazole synthase.